Here is a 396-residue protein sequence, read N- to C-terminus: Stearoyl-[acyl-carrier-protein] 9-desaturase, chloroplastic (396 aa).

A chloroplast-targeting transit peptide spans 1–33 (MAIRINTATFQSDLYRSFAFPQPKPLRSPKFAM). Fe cation is bound by residues glutamate 138, glutamate 176, histidine 179, glutamate 229, glutamate 262, and histidine 265.

This sequence belongs to the fatty acid desaturase type 2 family. Homodimer. The cofactor is Fe(2+).

The protein resides in the plastid. It is found in the chloroplast. The enzyme catalyses octadecanoyl-[ACP] + 2 reduced [2Fe-2S]-[ferredoxin] + O2 + 2 H(+) = (9Z)-octadecenoyl-[ACP] + 2 oxidized [2Fe-2S]-[ferredoxin] + 2 H2O. It functions in the pathway lipid metabolism; fatty acid metabolism. Its function is as follows. Converts stearoyl-ACP to oleoyl-ACP by introduction of a cis double bond between carbons 9 and 10 of the acyl chain. In Helianthus annuus (Common sunflower), this protein is Stearoyl-[acyl-carrier-protein] 9-desaturase, chloroplastic.